We begin with the raw amino-acid sequence, 241 residues long: tRNA pseudouridine synthase B (241 aa).

Residue Asp-45 is the Nucleophile of the active site.

Belongs to the pseudouridine synthase TruB family. Type 1 subfamily.

It catalyses the reaction uridine(55) in tRNA = pseudouridine(55) in tRNA. Functionally, responsible for synthesis of pseudouridine from uracil-55 in the psi GC loop of transfer RNAs. This Chlamydia muridarum (strain MoPn / Nigg) protein is tRNA pseudouridine synthase B.